The following is a 392-amino-acid chain: MISPFIVNDKNLFLSRFPVSQVNRSLQAWDSADEYLINHVHDQNLINAQTKVAIFNDAFGALAVNFCQSTSENPEVISINDSYISSEGASYNIEQNSLDDSHFTQLNSLDSLPNNIDVILYKIPKSKSLLIEQLIQIKKSVNENCIFIAADRAKEIHSSTLKVFEKHLGTTKTSLAVKKARLVFCQFDNKQVHQSPFPTVWSIPHKSTNDLPSRELTISNHANVYAREKLDIGARYFIENLPTVAANSTVIDLGCGNGVIGLTVLANQPEAHVQFIDESTMAISSAKQNIMTNLPDVIEQCEFTLNDSLTDIEGGSVDLILCNPPFHQNTATTDHIAWQMFKDSHRVLKKGGELRIIGNQKLAYHIKLQRLFGNETLIASNDKFVTQSAIKR.

It belongs to the methyltransferase superfamily. RlmG family.

It is found in the cytoplasm. The enzyme catalyses guanosine(1835) in 23S rRNA + S-adenosyl-L-methionine = N(2)-methylguanosine(1835) in 23S rRNA + S-adenosyl-L-homocysteine + H(+). Specifically methylates the guanine in position 1835 (m2G1835) of 23S rRNA. This is Ribosomal RNA large subunit methyltransferase G from Colwellia psychrerythraea (strain 34H / ATCC BAA-681) (Vibrio psychroerythus).